A 76-amino-acid chain; its full sequence is Large ribosomal subunit protein eL20 (76 aa).

The protein belongs to the eukaryotic ribosomal protein eL20 family. In terms of assembly, part of the 50S ribosomal subunit. Binds 23S rRNA.

In Methanococcus maripaludis (strain C5 / ATCC BAA-1333), this protein is Large ribosomal subunit protein eL20.